We begin with the raw amino-acid sequence, 387 residues long: Eukaryotic translation initiation factor 3 subunit M (387 aa).

One can recognise a PCI domain in the interval 181 to 340 (LSSKVMIELL…RKVHISSTMH (160 aa)).

The protein belongs to the eIF-3 subunit M family. In terms of assembly, component of the eukaryotic translation initiation factor 3 (eIF-3) complex. The eIF-3 complex interacts with pix.

The protein localises to the cytoplasm. It localises to the golgi apparatus. In terms of biological role, component of the eukaryotic translation initiation factor 3 (eIF-3) complex, which is involved in protein synthesis of a specialized repertoire of mRNAs and, together with other initiation factors, stimulates binding of mRNA and methionyl-tRNAi to the 40S ribosome. The eIF-3 complex specifically targets and initiates translation of a subset of mRNAs involved in cell proliferation. This Drosophila pseudoobscura pseudoobscura (Fruit fly) protein is Eukaryotic translation initiation factor 3 subunit M.